The primary structure comprises 378 residues: Queuine tRNA-ribosyltransferase (378 aa).

The active-site Proton acceptor is the D91. Substrate contacts are provided by residues D91–F95, D145, Q189, and G216. An RNA binding region spans residues G247 to D253. Catalysis depends on D266, which acts as the Nucleophile. The tract at residues T271 to R275 is RNA binding; important for wobble base 34 recognition. The Zn(2+) site is built by C304, C306, C309, and H335.

It belongs to the queuine tRNA-ribosyltransferase family. As to quaternary structure, homodimer. Within each dimer, one monomer is responsible for RNA recognition and catalysis, while the other monomer binds to the replacement base PreQ1. Zn(2+) serves as cofactor.

The catalysed reaction is 7-aminomethyl-7-carbaguanine + guanosine(34) in tRNA = 7-aminomethyl-7-carbaguanosine(34) in tRNA + guanine. Its pathway is tRNA modification; tRNA-queuosine biosynthesis. Catalyzes the base-exchange of a guanine (G) residue with the queuine precursor 7-aminomethyl-7-deazaguanine (PreQ1) at position 34 (anticodon wobble position) in tRNAs with GU(N) anticodons (tRNA-Asp, -Asn, -His and -Tyr). Catalysis occurs through a double-displacement mechanism. The nucleophile active site attacks the C1' of nucleotide 34 to detach the guanine base from the RNA, forming a covalent enzyme-RNA intermediate. The proton acceptor active site deprotonates the incoming PreQ1, allowing a nucleophilic attack on the C1' of the ribose to form the product. After dissociation, two additional enzymatic reactions on the tRNA convert PreQ1 to queuine (Q), resulting in the hypermodified nucleoside queuosine (7-(((4,5-cis-dihydroxy-2-cyclopenten-1-yl)amino)methyl)-7-deazaguanosine). The protein is Queuine tRNA-ribosyltransferase of Vibrio vulnificus (strain CMCP6).